The sequence spans 77 residues: Putative Fis-like DNA-binding protein (77 aa).

A DNA-binding region (H-T-H motif) is located at residues 53-72 (QSLAADYLGINRNTLRKKLQ).

This sequence belongs to the transcriptional regulatory Fis family.

The sequence is that of Putative Fis-like DNA-binding protein from Ralstonia nicotianae (strain ATCC BAA-1114 / GMI1000) (Ralstonia solanacearum).